Reading from the N-terminus, the 214-residue chain is ATP-dependent Clp protease proteolytic subunit 2 (214 aa).

Residue Ser-110 is the Nucleophile of the active site. The active site involves His-135.

Belongs to the peptidase S14 family. In terms of assembly, fourteen ClpP subunits assemble into 2 heptameric rings which stack back to back to give a disk-like structure with a central cavity, resembling the structure of eukaryotic proteasomes.

Its subcellular location is the cytoplasm. It catalyses the reaction Hydrolysis of proteins to small peptides in the presence of ATP and magnesium. alpha-casein is the usual test substrate. In the absence of ATP, only oligopeptides shorter than five residues are hydrolyzed (such as succinyl-Leu-Tyr-|-NHMec, and Leu-Tyr-Leu-|-Tyr-Trp, in which cleavage of the -Tyr-|-Leu- and -Tyr-|-Trp bonds also occurs).. Functionally, cleaves peptides in various proteins in a process that requires ATP hydrolysis. Has a chymotrypsin-like activity. Plays a major role in the degradation of misfolded proteins. The polypeptide is ATP-dependent Clp protease proteolytic subunit 2 (Mycobacterium leprae (strain TN)).